The sequence spans 154 residues: Transcriptional repressor NrdR (154 aa).

Residues 3-34 (CPFCGANDTKVIDSRLVAEGEQVRRRRECLAC) fold into a zinc finger. Residues 49–139 (PRLIKQDGSR…VYRRFQDLNE (91 aa)) enclose the ATP-cone domain.

Belongs to the NrdR family. Zn(2+) is required as a cofactor.

Its function is as follows. Negatively regulates transcription of bacterial ribonucleotide reductase nrd genes and operons by binding to NrdR-boxes. The chain is Transcriptional repressor NrdR from Pseudomonas syringae pv. syringae (strain B728a).